A 177-amino-acid chain; its full sequence is Adenylate kinase (177 aa).

13 to 18 (GCGKGT) provides a ligand contact to ATP. The segment at 33–62 (SSGDIIREEMKKSSKEATVIREMVNSGRLA) is NMP. AMP contacts are provided by residues Ser34, Arg39, 60-62 (RLA), 85-88 (GYPR), and Gln92. The tract at residues 119–127 (GRNEGRDDD) is LID. Arg120 is an ATP binding site. AMP-binding residues include Arg124 and Arg135.

Belongs to the adenylate kinase family. As to quaternary structure, monomer.

The protein localises to the cytoplasm. The enzyme catalyses AMP + ATP = 2 ADP. Its function is as follows. Catalyzes the reversible transfer of the terminal phosphate group between ATP and AMP. Plays an important role in cellular energy homeostasis and in adenine nucleotide metabolism. The sequence is that of Adenylate kinase from Encephalitozoon cuniculi (strain GB-M1) (Microsporidian parasite).